The sequence spans 345 residues: Fe(3+) ions import ATP-binding protein FbpC (345 aa).

In terms of domain architecture, ABC transporter spans 3 to 233; that stretch reads LSLKAATVRF…PADEFVARFL (231 aa). 35 to 42 lines the ATP pocket; the sequence is GPSGSGKS.

It belongs to the ABC transporter superfamily. Fe(3+) ion importer (TC 3.A.1.10) family. As to quaternary structure, the complex is composed of two ATP-binding proteins (FbpC), two transmembrane proteins (FbpB) and a solute-binding protein (FbpA).

It is found in the cell membrane. The enzyme catalyses Fe(3+)(out) + ATP + H2O = Fe(3+)(in) + ADP + phosphate + H(+). In terms of biological role, part of the ABC transporter complex FbpABC involved in Fe(3+) ions import. Responsible for energy coupling to the transport system. This is Fe(3+) ions import ATP-binding protein FbpC from Streptomyces avermitilis (strain ATCC 31267 / DSM 46492 / JCM 5070 / NBRC 14893 / NCIMB 12804 / NRRL 8165 / MA-4680).